The following is a 526-amino-acid chain: Trigger factor (526 aa).

A PPIase FKBP-type domain is found at 162–243 (GDFVSIDLSA…LGSVKERELP (82 aa)). A compositionally biased stretch (basic and acidic residues) spans 425–460 (DTDGADVDPKEYFGDVEAEGDKADKAETDKAEEKPK). The interval 425 to 526 (DTDGADVDPK…AKKAAEKKED (102 aa)) is disordered. A compositionally biased stretch (basic residues) spans 461–517 (KAPAKKSTTKKSTAKKSTAKKSTAKKSTAKKSTAKKSTTKKATKSTAKKSTAKKTTA).

Belongs to the FKBP-type PPIase family. Tig subfamily.

It localises to the cytoplasm. It catalyses the reaction [protein]-peptidylproline (omega=180) = [protein]-peptidylproline (omega=0). Functionally, involved in protein export. Acts as a chaperone by maintaining the newly synthesized protein in an open conformation. Functions as a peptidyl-prolyl cis-trans isomerase. The chain is Trigger factor from Corynebacterium jeikeium (strain K411).